We begin with the raw amino-acid sequence, 1244 residues long: Actin cytoskeleton-regulatory complex protein SLA1 (1244 aa).

SH3 domains follow at residues 3-68 (VFLG…IEEA) and 69-132 (PVLK…PENG). 2 disordered regions span residues 128 to 248 (EPEN…GNHE) and 415 to 497 (DKKH…PKKS). Residues 140 to 159 (APAAAEAPAATPAAAPASAA) are compositionally biased toward low complexity. Over residues 171–184 (HNDRARMMQSKEDQ) the composition is skewed to basic and acidic residues. Over residues 199–214 (ARPTATTETTDATAAA) the composition is skewed to low complexity. Residues 226–235 (NDNDDEEDDY) show a composition bias toward acidic residues. The region spanning 353–415 (KSKKRGIVQY…PAQFIEPVRD (63 aa)) is the SH3 3 domain. Residues 429–447 (SIKKNFTKSPSRSRSRSRS) show a composition bias toward basic residues. Phosphoserine occurs at positions 447, 449, and 454. Residues Lys471 and Lys548 each participate in a glycyl lysine isopeptide (Lys-Gly) (interchain with G-Cter in ubiquitin) cross-link. Positions 471-484 (KRSRKSSLSSHKKN) are enriched in basic residues. 3 disordered regions span residues 558–592 (KAND…RDRR), 610–649 (EERS…SNNN), and 726–791 (PTNA…NLLS). 2 stretches are compositionally biased toward basic and acidic residues: residues 568 to 592 (TDSR…RDRR) and 610 to 621 (EERSRLQEKELP). Over residues 629–649 (TSTTSVPNTTSVPPAESSNNN) the composition is skewed to low complexity. A compositionally biased stretch (polar residues) spans 726-756 (PTNATGNMFSQPDGSLNVATSPETSLPQQLL). The span at 757–771 (PQTTSPAQTAPSTSA) shows a compositional bias: low complexity. Ser799 carries the phosphoserine modification. The disordered stretch occupies residues 813–853 (KAAASTPEPNLKDLEPVKTGGTTVPAAPVSSAPVSSAPAPL). A Phosphothreonine modification is found at Thr831. The span at 836 to 851 (VPAAPVSSAPVSSAPA) shows a compositional bias: low complexity. The residue at position 858 (Thr858) is a Phosphothreonine. 3 tandem repeats follow at residues 868-874 (TGFVMMP), 877-883 (TGGDMLP), and 887-893 (TGGFVVP). Residues 868–1205 (TGFVMMPMIT…NTFNTGGAMQ (338 aa)) are 16 X 7 AA approximate repeats of T-G-G-A-M-M-P. Phosphothreonine occurs at positions 887 and 904. A run of 2 repeats spans residues 923–929 (TGGAMMP) and 945–951 (TGGGLIP). A phosphothreonine mark is found at Thr984 and Thr993. Phosphoserine is present on Ser996. Repeat copies occupy residues 1003–1009 (TGGTMIP), 1020–1026 (TGGAMMT), 1031–1037 (TGSAMMP), 1048–1054 (TGGAMMP), and 1065–1071 (TGGAMMP). The residue at position 1075 (Thr1075) is a Phosphothreonine. Tandem repeats lie at residues 1084 to 1090 (TGGAMIP), 1129 to 1135 (TGGAMNT), 1155 to 1161 (TGGVMQE), 1170 to 1176 (TGGAMQQ), 1185 to 1191 (TDGIMQQ), and 1200 to 1206 (TGGAMQQ).

It belongs to the SLA1 family. As to quaternary structure, component of the PAN1 actin cytoskeleton-regulatory complex. Interacts with ABP1, KRE6, LAS17, LSB5, RSP5, RVS167, VPS1 and YSC84. Phosphorylated by PRK1.

It localises to the nucleus. Its subcellular location is the cell membrane. The protein localises to the endosome membrane. The protein resides in the cytoplasm. It is found in the cytoskeleton. It localises to the actin patch. Functionally, component of the PAN1 actin cytoskeleton-regulatory complex required for the internalization of endosomes during actin-coupled endocytosis. The complex links the site of endocytosis to the cell membrane-associated actin cytoskeleton. Mediates uptake of external molecules and vacuolar degradation of plasma membrane proteins. Plays a role in the proper organization of the cell membrane-associated actin cytoskeleton and promotes its destabilization. This chain is Actin cytoskeleton-regulatory complex protein SLA1 (SLA1), found in Saccharomyces cerevisiae (strain ATCC 204508 / S288c) (Baker's yeast).